We begin with the raw amino-acid sequence, 238 residues long: MRRYLIVDDNRDFAENLAEILRDGGDEVAIAENGQEALALARKTRFDALLTDMRMPLMGGAELVHELRRIDPGAAAMVITAHVADDALEAARREGLLAVLPKPVAVPRILDLLAAARRDGLVAVVEDDSRMSDNLCEALRGRGFAAVTAASVTETERLGPVEPFCALVDLRVPGGADGDALRRLRERFPGLPVIVVTGTHEVPPVPHQGYFTKPFDTAELLSAVERLHRERGQTVVPE.

2 Response regulatory domains span residues 3–117 (RYLI…AAAR) and 121–228 (LVAV…ERLH). 2 positions are modified to 4-aspartylphosphate: D52 and D169.

In terms of processing, is diphosphorylated by GchK.

Its function is as follows. Member of the two-component regulatory system GcHK/Anae109_2439. Is involved in a signal transduction system responding to oxygen availability. The polypeptide is Response regulator receiver protein Anae109_2439 (Anaeromyxobacter sp. (strain Fw109-5)).